We begin with the raw amino-acid sequence, 406 residues long: NADH-quinone oxidoreductase subunit D (406 aa).

This sequence belongs to the complex I 49 kDa subunit family. As to quaternary structure, NDH-1 is composed of 14 different subunits. Subunits NuoB, C, D, E, F, and G constitute the peripheral sector of the complex.

It is found in the cell inner membrane. It carries out the reaction a quinone + NADH + 5 H(+)(in) = a quinol + NAD(+) + 4 H(+)(out). Functionally, NDH-1 shuttles electrons from NADH, via FMN and iron-sulfur (Fe-S) centers, to quinones in the respiratory chain. The immediate electron acceptor for the enzyme in this species is believed to be ubiquinone. Couples the redox reaction to proton translocation (for every two electrons transferred, four hydrogen ions are translocated across the cytoplasmic membrane), and thus conserves the redox energy in a proton gradient. In Rhizorhabdus wittichii (strain DSM 6014 / CCUG 31198 / JCM 15750 / NBRC 105917 / EY 4224 / RW1) (Sphingomonas wittichii), this protein is NADH-quinone oxidoreductase subunit D.